A 364-amino-acid chain; its full sequence is Phospho-N-acetylmuramoyl-pentapeptide-transferase (364 aa).

10 consecutive transmembrane segments (helical) span residues 3–23 (AILFGGGLALLVSLLGTRVAI), 51–71 (TMGGVVIILATVVGYFGAKLI), 80–100 (ALLLLFLLVGTGLVGFVDDFI), 116–136 (MIGLTVVALVFGILSLSSWLE), 154–174 (IGWITLPTVVVLLLIWLIIAA), 185–205 (LDGLATGASVMVFGAYMFVNI), 229–249 (PLDLAVVAAAITGACFGFLWW), 256–276 (IFMGDTGSLALGGALAGLAIL), 281–301 (LLLIILGGLFVMETVSVMLQV), and 341–361 (FWIITGICVAAGLGVFYAEWV).

This sequence belongs to the glycosyltransferase 4 family. MraY subfamily. The cofactor is Mg(2+).

It localises to the cell membrane. The catalysed reaction is UDP-N-acetyl-alpha-D-muramoyl-L-alanyl-gamma-D-glutamyl-meso-2,6-diaminopimeloyl-D-alanyl-D-alanine + di-trans,octa-cis-undecaprenyl phosphate = di-trans,octa-cis-undecaprenyl diphospho-N-acetyl-alpha-D-muramoyl-L-alanyl-D-glutamyl-meso-2,6-diaminopimeloyl-D-alanyl-D-alanine + UMP. The protein operates within cell wall biogenesis; peptidoglycan biosynthesis. Its function is as follows. Catalyzes the initial step of the lipid cycle reactions in the biosynthesis of the cell wall peptidoglycan: transfers peptidoglycan precursor phospho-MurNAc-pentapeptide from UDP-MurNAc-pentapeptide onto the lipid carrier undecaprenyl phosphate, yielding undecaprenyl-pyrophosphoryl-MurNAc-pentapeptide, known as lipid I. In Nocardioides sp. (strain ATCC BAA-499 / JS614), this protein is Phospho-N-acetylmuramoyl-pentapeptide-transferase.